We begin with the raw amino-acid sequence, 517 residues long: Serine hydroxymethyltransferase 1, mitochondrial (517 aa).

A mitochondrion-targeting transit peptide spans 1 to 31; sequence MAMALALRRLSSSADKPLQRLFNGGHLYSMS. The residue at position 287 (lysine 287) is an N6-(pyridoxal phosphate)lysine.

This sequence belongs to the SHMT family. In terms of assembly, homotetramer. The cofactor is pyridoxal 5'-phosphate.

The protein localises to the mitochondrion. It carries out the reaction (6R)-5,10-methylene-5,6,7,8-tetrahydrofolate + glycine + H2O = (6S)-5,6,7,8-tetrahydrofolate + L-serine. It functions in the pathway one-carbon metabolism; tetrahydrofolate interconversion. Its function is as follows. Catalyzes the interconversion of serine and glycine. The chain is Serine hydroxymethyltransferase 1, mitochondrial from Flaveria pringlei.